A 302-amino-acid polypeptide reads, in one-letter code: Sulfate adenylyltransferase subunit 2 (302 aa).

This sequence belongs to the PAPS reductase family. CysD subfamily. Heterodimer composed of CysD, the smaller subunit, and CysN.

It catalyses the reaction sulfate + ATP + H(+) = adenosine 5'-phosphosulfate + diphosphate. Its pathway is sulfur metabolism; hydrogen sulfide biosynthesis; sulfite from sulfate: step 1/3. In terms of biological role, with CysN forms the ATP sulfurylase (ATPS) that catalyzes the adenylation of sulfate producing adenosine 5'-phosphosulfate (APS) and diphosphate, the first enzymatic step in sulfur assimilation pathway. APS synthesis involves the formation of a high-energy phosphoric-sulfuric acid anhydride bond driven by GTP hydrolysis by CysN coupled to ATP hydrolysis by CysD. This Zymomonas mobilis subsp. mobilis (strain ATCC 31821 / ZM4 / CP4) protein is Sulfate adenylyltransferase subunit 2.